Reading from the N-terminus, the 159-residue chain is Transcription elongation factor A protein-like 1 (159 aa).

The disordered stretch occupies residues 1 to 97 (MDKPRKENEE…PPCGVGKHKL (97 aa)). The segment covering 17-34 (KTDEERPPVEHSPEKQSP) has biased composition (basic and acidic residues). A phosphoserine mark is found at Ser28, Ser33, Ser38, Ser39, Ser43, and Ser44. Positions 37-54 (QSSEEQSSEEEFFPEELL) are enriched in acidic residues. The span at 64 to 80 (SEERPPQEGLSRKDLFE) shows a compositional bias: basic and acidic residues.

Belongs to the TFS-II family. TFA subfamily. In terms of processing, phosphorylation of Ser-38 and Ser-39 is critical for transcriptional repression. As to expression, expressed in all tissues examined. Highly expressed in heart, ovary, prostate and skeletal muscle. Moderately expressed in brain, placenta, testis and small intestine. Weakly expressed in lung, liver and spleen. Expressed in several cancer cell lines.

The protein localises to the nucleus. Its function is as follows. May be involved in transcriptional regulation. Modulates various viral and cellular promoters in a promoter context-dependent manner. For example, transcription from the FOS promoter is increased, while Rous sarcoma virus (RSV) long terminal repeat (LTR) promoter activity is repressed. Does not bind DNA directly. This chain is Transcription elongation factor A protein-like 1, found in Homo sapiens (Human).